Consider the following 200-residue polypeptide: ADP-ribosylation factor-like protein 4A (200 aa).

Glycine 2 carries N-myristoyl glycine lipidation. Residues 27 to 34 (GLDCAGKT), 75 to 79 (DVGGQ), and 134 to 137 (NKQD) contribute to the GTP site.

The protein belongs to the small GTPase superfamily. Arf family. Interacts with CYTH2. Interacts with KPNA2; the interaction is direct. Does not interact with ARL4A. Myristoylated.

It is found in the cell membrane. The protein resides in the cytoplasm. The protein localises to the nucleus. It localises to the nucleolus. Its function is as follows. Small GTP-binding protein which cycles between an inactive GDP-bound and an active GTP-bound form, and the rate of cycling is regulated by guanine nucleotide exchange factors (GEF) and GTPase-activating proteins (GAP). GTP-binding protein that does not act as an allosteric activator of the cholera toxin catalytic subunit. Recruits CYTH1, CYTH2, CYTH3 and CYTH4 to the plasma membrane in GDP-bound form. This is ADP-ribosylation factor-like protein 4A (ARL4A) from Homo sapiens (Human).